We begin with the raw amino-acid sequence, 90 residues long: Probable Fe(2+)-trafficking protein (90 aa).

It belongs to the Fe(2+)-trafficking protein family.

Functionally, could be a mediator in iron transactions between iron acquisition and iron-requiring processes, such as synthesis and/or repair of Fe-S clusters in biosynthetic enzymes. This is Probable Fe(2+)-trafficking protein from Nitrosococcus oceani (strain ATCC 19707 / BCRC 17464 / JCM 30415 / NCIMB 11848 / C-107).